A 188-amino-acid chain; its full sequence is GTPase KRas (188 aa).

An N-acetylmethionine modification is found at M1. The residue at position 2 (T2) is an N-acetylthreonine; in GTPase KRas, N-terminally processed. Residues 10–18, 29–35, and 59–60 contribute to the GTP site; these read GAGGVGKSA, VDEYDPT, and AG. The Effector region motif lies at 32–40; sequence YDPTIEDSY. K104 bears the N6-acetyllysine mark. A GTP-binding site is contributed by 116–119; the sequence is NKCD. The interval 166-185 is hypervariable region; that stretch reads HKEKMSKDGKKKKKKSKTKC. Residues 167-188 form a disordered region; it reads KEKMSKDGKKKKKKSKTKCIIM. Residue C185 is modified to Cysteine methyl ester. A lipid anchor (S-farnesyl cysteine) is attached at C185. The propeptide at 186-188 is removed in mature form; it reads IIM.

Belongs to the small GTPase superfamily. Ras family. As to quaternary structure, interacts with PHLPP. Interacts (active GTP-bound form preferentially) with RGS14. Interacts (when farnesylated) with PDE6D; this promotes dissociation from the cell membrane. Interacts with SOS1. Interacts (when farnesylated) with GPR31. Interacts with RAP1GDS1. Interacts (active GTP-bound form) with both SHOC2 and PP1c (all isoforms) to form a tertiary complex; SHOC2 and PP1c preferably bind M-Ras/MRAS, but they also bind K-Ras/KRAS, N-Ras/NRAS and H-Ras/HRAS. Interacts (GTP-bound form) with MAPKAP1/SIN1; inhibiting K-Ras/KRAS activity. Post-translationally, acetylation at Lys-104 prevents interaction with guanine nucleotide exchange factors (GEFs).

The protein localises to the cell membrane. It is found in the cytoplasm. It localises to the cytosol. The enzyme catalyses GTP + H2O = GDP + phosphate + H(+). Alternates between an inactive form bound to GDP and an active form bound to GTP. Activated by a guanine nucleotide-exchange factor (GEF) and inactivated by a GTPase-activating protein (GAP). Interaction with SOS1 promotes exchange of bound GDP to GTP. Ras proteins bind GDP/GTP and possess intrinsic GTPase activity. Plays an important role in the regulation of cell proliferation. Plays a role in promoting oncogenic events by inducing transcriptional silencing of tumor suppressor genes (TSGs) in colorectal cancer (CRC) cells in a ZNF304-dependent manner. The polypeptide is GTPase KRas (KRAS) (Monodelphis domestica (Gray short-tailed opossum)).